A 388-amino-acid polypeptide reads, in one-letter code: Succinate--CoA ligase [ADP-forming] subunit beta (388 aa).

Residues 9-244 (KEILRQAGVP…LDEEDPAEVE (236 aa)) form the ATP-grasp domain. Residues lysine 46, 53 to 55 (GRG), glutamate 99, alanine 102, and glutamate 107 each bind ATP. Residues asparagine 199 and aspartate 213 each coordinate Mg(2+). Substrate is bound by residues asparagine 264 and 321–323 (GIM).

It belongs to the succinate/malate CoA ligase beta subunit family. As to quaternary structure, heterotetramer of two alpha and two beta subunits. Requires Mg(2+) as cofactor.

The enzyme catalyses succinate + ATP + CoA = succinyl-CoA + ADP + phosphate. The catalysed reaction is GTP + succinate + CoA = succinyl-CoA + GDP + phosphate. The protein operates within carbohydrate metabolism; tricarboxylic acid cycle; succinate from succinyl-CoA (ligase route): step 1/1. In terms of biological role, succinyl-CoA synthetase functions in the citric acid cycle (TCA), coupling the hydrolysis of succinyl-CoA to the synthesis of either ATP or GTP and thus represents the only step of substrate-level phosphorylation in the TCA. The beta subunit provides nucleotide specificity of the enzyme and binds the substrate succinate, while the binding sites for coenzyme A and phosphate are found in the alpha subunit. The chain is Succinate--CoA ligase [ADP-forming] subunit beta from Albidiferax ferrireducens (strain ATCC BAA-621 / DSM 15236 / T118) (Rhodoferax ferrireducens).